The primary structure comprises 150 residues: Myosin, essential light chain (150 aa).

EF-hand domains lie at 3–38 (ASADQIQECFSIFDKDNDGKVSVEDIGACLRSLGKS) and 75–110 (EQQKEMLDAFKALDKEGHGTIQGAELRQLLTTLGDY). Residues Asp16, Asp18, Asp20, Lys22, and Asp27 each contribute to the Ca(2+) site.

In terms of assembly, myosin is a hexamer of 2 heavy chains and 4 light chains (two regulatory light chains and two essential light chains).

The protein is Myosin, essential light chain (mlcE) of Dictyostelium discoideum (Social amoeba).